We begin with the raw amino-acid sequence, 152 residues long: Prefoldin subunit alpha (152 aa).

The tract at residues 110-152 is disordered; sequence ETQEEVDELESESQELEQQAQQMQQQMQQQQMQQMQQSQGDEE. A compositionally biased stretch (acidic residues) spans 111 to 124; that stretch reads TQEEVDELESESQE. Residues 125-152 show a composition bias toward low complexity; the sequence is LEQQAQQMQQQMQQQQMQQMQQSQGDEE.

It belongs to the prefoldin alpha subunit family. Heterohexamer of two alpha and four beta subunits.

It localises to the cytoplasm. Functionally, molecular chaperone capable of stabilizing a range of proteins. Seems to fulfill an ATP-independent, HSP70-like function in archaeal de novo protein folding. The polypeptide is Prefoldin subunit alpha (Halorubrum lacusprofundi (strain ATCC 49239 / DSM 5036 / JCM 8891 / ACAM 34)).